The chain runs to 305 residues: Carbamate kinase (305 aa).

The protein belongs to the carbamate kinase family.

It is found in the cytoplasm. It carries out the reaction hydrogencarbonate + NH4(+) + ATP = carbamoyl phosphate + ADP + H2O + H(+). It functions in the pathway metabolic intermediate metabolism; carbamoyl phosphate degradation; CO(2) and NH(3) from carbamoyl phosphate: step 1/1. This is Carbamate kinase (arcC) from Thermoplasma volcanium (strain ATCC 51530 / DSM 4299 / JCM 9571 / NBRC 15438 / GSS1).